The sequence spans 126 residues: Fluoride-specific ion channel FluC (126 aa).

4 consecutive transmembrane segments (helical) span residues 7–27 (LWLA…VLLL), 36–56 (FPAA…LTLA), 74–94 (GVLG…GLLL), and 98–118 (GGLA…AAVA). Na(+) contacts are provided by glycine 77 and threonine 80.

It belongs to the fluoride channel Fluc/FEX (TC 1.A.43) family.

Its subcellular location is the cell membrane. The enzyme catalyses fluoride(in) = fluoride(out). With respect to regulation, na(+) is not transported, but it plays an essential structural role and its presence is essential for fluoride channel function. Its function is as follows. Fluoride-specific ion channel. Important for reducing fluoride concentration in the cell, thus reducing its toxicity. The polypeptide is Fluoride-specific ion channel FluC (Deinococcus radiodurans (strain ATCC 13939 / DSM 20539 / JCM 16871 / CCUG 27074 / LMG 4051 / NBRC 15346 / NCIMB 9279 / VKM B-1422 / R1)).